The sequence spans 281 residues: DegV domain-containing protein CPE2509 (281 aa).

The region spanning 4–279 (IAIITDSSCD…PGMVGVSIQK (276 aa)) is the DegV domain. Hexadecanoate contacts are provided by threonine 60 and serine 93.

May bind long-chain fatty acids, such as palmitate, and may play a role in lipid transport or fatty acid metabolism. The sequence is that of DegV domain-containing protein CPE2509 from Clostridium perfringens (strain 13 / Type A).